A 181-amino-acid chain; its full sequence is ADP-ribosylation factor 2-A (181 aa).

A lipid anchor (N-myristoyl glycine) is attached at Gly2. Residues 24-31, 67-71, and 126-129 contribute to the GTP site; these read GLDAAGKT, DVGGQ, and NKQD.

Belongs to the small GTPase superfamily. Arf family.

The protein resides in the golgi apparatus. Activated by AGD10. In terms of biological role, GTP-binding protein involved in protein trafficking; may modulate vesicle budding and uncoating within the Golgi apparatus. The protein is ADP-ribosylation factor 2-A (ARF2-A) of Arabidopsis thaliana (Mouse-ear cress).